Consider the following 250-residue polypeptide: 3-deoxy-manno-octulosonate cytidylyltransferase (250 aa).

This sequence belongs to the KdsB family.

It localises to the cytoplasm. The enzyme catalyses 3-deoxy-alpha-D-manno-oct-2-ulosonate + CTP = CMP-3-deoxy-beta-D-manno-octulosonate + diphosphate. It participates in nucleotide-sugar biosynthesis; CMP-3-deoxy-D-manno-octulosonate biosynthesis; CMP-3-deoxy-D-manno-octulosonate from 3-deoxy-D-manno-octulosonate and CTP: step 1/1. Its pathway is bacterial outer membrane biogenesis; lipopolysaccharide biosynthesis. Functionally, activates KDO (a required 8-carbon sugar) for incorporation into bacterial lipopolysaccharide in Gram-negative bacteria. In Rhizobium meliloti (strain 1021) (Ensifer meliloti), this protein is 3-deoxy-manno-octulosonate cytidylyltransferase.